We begin with the raw amino-acid sequence, 474 residues long: Nitrogenase vanadium-iron protein alpha chain (474 aa).

Positions 49, 75, and 138 each coordinate [8Fe-7S] cluster. 2 residues coordinate [7Fe-V-9S-C-homocitryl] cluster: Cys257 and His423.

The protein belongs to the NifD/NifK/NifE/NifN family. As to quaternary structure, hexamer of two alpha, two beta, and two delta chains. The cofactor is [8Fe-7S] cluster. [7Fe-V-9S-C-homocitryl] cluster serves as cofactor.

It carries out the reaction N2 + 8 reduced [2Fe-2S]-[ferredoxin] + 16 ATP + 16 H2O = H2 + 8 oxidized [2Fe-2S]-[ferredoxin] + 2 NH4(+) + 16 ADP + 16 phosphate + 6 H(+). Its function is as follows. This vanadium-iron protein is part of the nitrogenase complex that catalyzes the key enzymatic reactions in nitrogen fixation. The polypeptide is Nitrogenase vanadium-iron protein alpha chain (vnfD) (Azotobacter vinelandii).